Here is a 269-residue protein sequence, read N- to C-terminus: Formamidopyrimidine-DNA glycosylase (269 aa).

Catalysis depends on proline 2, which acts as the Schiff-base intermediate with DNA. The active-site Proton donor is glutamate 3. Lysine 57 functions as the Proton donor; for beta-elimination activity in the catalytic mechanism. Residues histidine 90, arginine 109, and lysine 150 each coordinate DNA. The segment at glutamine 235 to histidine 269 adopts an FPG-type zinc-finger fold. Residue arginine 259 is the Proton donor; for delta-elimination activity of the active site.

Belongs to the FPG family. Monomer. It depends on Zn(2+) as a cofactor.

It catalyses the reaction Hydrolysis of DNA containing ring-opened 7-methylguanine residues, releasing 2,6-diamino-4-hydroxy-5-(N-methyl)formamidopyrimidine.. The enzyme catalyses 2'-deoxyribonucleotide-(2'-deoxyribose 5'-phosphate)-2'-deoxyribonucleotide-DNA = a 3'-end 2'-deoxyribonucleotide-(2,3-dehydro-2,3-deoxyribose 5'-phosphate)-DNA + a 5'-end 5'-phospho-2'-deoxyribonucleoside-DNA + H(+). Its function is as follows. Involved in base excision repair of DNA damaged by oxidation or by mutagenic agents. Acts as a DNA glycosylase that recognizes and removes damaged bases. Has a preference for oxidized purines, such as 7,8-dihydro-8-oxoguanine (8-oxoG). Has AP (apurinic/apyrimidinic) lyase activity and introduces nicks in the DNA strand. Cleaves the DNA backbone by beta-delta elimination to generate a single-strand break at the site of the removed base with both 3'- and 5'-phosphates. The protein is Formamidopyrimidine-DNA glycosylase of Sodalis glossinidius (strain morsitans).